A 160-amino-acid polypeptide reads, in one-letter code: Phosphopantetheine adenylyltransferase (160 aa).

Ser-9 lines the substrate pocket. Residues 9–10 (SF) and His-17 each bind ATP. The substrate site is built by Lys-41, Val-73, and Lys-87. ATP-binding positions include 88-90 (GLR), Glu-98, and 122-128 (YSFVSSS).

This sequence belongs to the bacterial CoaD family. Homohexamer. Mg(2+) is required as a cofactor.

It localises to the cytoplasm. The enzyme catalyses (R)-4'-phosphopantetheine + ATP + H(+) = 3'-dephospho-CoA + diphosphate. Its pathway is cofactor biosynthesis; coenzyme A biosynthesis; CoA from (R)-pantothenate: step 4/5. Its function is as follows. Reversibly transfers an adenylyl group from ATP to 4'-phosphopantetheine, yielding dephospho-CoA (dPCoA) and pyrophosphate. This is Phosphopantetheine adenylyltransferase from Mycobacterium leprae (strain TN).